A 348-amino-acid polypeptide reads, in one-letter code: Dihydroorotase (348 aa).

Positions 17 and 19 each coordinate Zn(2+). Residues 19–21 (HLR) and Asn-45 contribute to the substrate site. Lys-103, His-140, and His-178 together coordinate Zn(2+). Lys-103 carries the N6-carboxylysine modification. Residue His-140 participates in substrate binding. Position 223 (Leu-223) interacts with substrate. Zn(2+) is bound at residue Asp-251. Residue Asp-251 is part of the active site. Positions 255 and 267 each coordinate substrate.

Belongs to the metallo-dependent hydrolases superfamily. DHOase family. Class II DHOase subfamily. As to quaternary structure, homodimer. The cofactor is Zn(2+).

The catalysed reaction is (S)-dihydroorotate + H2O = N-carbamoyl-L-aspartate + H(+). It functions in the pathway pyrimidine metabolism; UMP biosynthesis via de novo pathway; (S)-dihydroorotate from bicarbonate: step 3/3. Functionally, catalyzes the reversible cyclization of carbamoyl aspartate to dihydroorotate. In Salmonella newport (strain SL254), this protein is Dihydroorotase.